The chain runs to 348 residues: Histidinol-phosphate aminotransferase (348 aa).

Position 207 is an N6-(pyridoxal phosphate)lysine (Lys207).

The protein belongs to the class-II pyridoxal-phosphate-dependent aminotransferase family. Histidinol-phosphate aminotransferase subfamily. In terms of assembly, homodimer. The cofactor is pyridoxal 5'-phosphate.

It catalyses the reaction L-histidinol phosphate + 2-oxoglutarate = 3-(imidazol-4-yl)-2-oxopropyl phosphate + L-glutamate. The protein operates within amino-acid biosynthesis; L-histidine biosynthesis; L-histidine from 5-phospho-alpha-D-ribose 1-diphosphate: step 7/9. The polypeptide is Histidinol-phosphate aminotransferase (Crocosphaera subtropica (strain ATCC 51142 / BH68) (Cyanothece sp. (strain ATCC 51142))).